The sequence spans 232 residues: Orotidine 5'-phosphate decarboxylase (232 aa).

Residues Asp-16, Lys-38, 65-74 (DLKLHDIGNT), Thr-119, Arg-180, Gln-189, Gly-209, and Arg-210 each bind substrate. The active-site Proton donor is Lys-67.

It belongs to the OMP decarboxylase family. Type 1 subfamily. Homodimer.

It catalyses the reaction orotidine 5'-phosphate + H(+) = UMP + CO2. Its pathway is pyrimidine metabolism; UMP biosynthesis via de novo pathway; UMP from orotate: step 2/2. Functionally, catalyzes the decarboxylation of orotidine 5'-monophosphate (OMP) to uridine 5'-monophosphate (UMP). The protein is Orotidine 5'-phosphate decarboxylase of Methylorubrum populi (strain ATCC BAA-705 / NCIMB 13946 / BJ001) (Methylobacterium populi).